A 389-amino-acid polypeptide reads, in one-letter code: Transmembrane protease serine 11A (389 aa).

Residues 1–23 (MEVAGYGTHNRDLKQWMVTLLSA) are Cytoplasmic-facing. Residues 24 to 44 (LSLMMVVVTIGLLALFLVFDI) form a helical; Signal-anchor for type II membrane protein membrane-spanning segment. Positions 31 to 148 (VTIGLLALFL…SLVQVKDCGK (118 aa)) constitute an SEA domain. At 45 to 389 (QVNSNSGQKS…RHWIASKTGL (345 aa)) the chain is on the extracellular side. Residues 158-388 (IVSGNPAAKG…YRHWIASKTG (231 aa)) form the Peptidase S1 domain. Cys183 and Cys199 are joined by a disulfide. Residues His198 and Asp243 each act as charge relay system in the active site. An N-linked (GlcNAc...) asparagine glycan is attached at Asn274. Disulfide bonds link Cys308–Cys324 and Cys335–Cys364. The Charge relay system role is filled by Ser339.

The protein belongs to the peptidase S1 family.

It localises to the membrane. Functionally, probable serine protease which may play a role in cellular senescence. Overexpression inhibits cell growth and induce G1 cell cycle arrest. The polypeptide is Transmembrane protease serine 11A (Tmprss11a) (Mus musculus (Mouse)).